We begin with the raw amino-acid sequence, 498 residues long: Putative ABC transporter ATP-binding protein MM_2387 (498 aa).

ABC transporter domains follow at residues 2 to 242 and 258 to 490; these read IELR…TSKS and ISIK…VEEK. ATP is bound by residues 36–43 and 290–297; these read GHSAAGKT and GENGSGKT.

The protein belongs to the ABC transporter superfamily.

Its subcellular location is the cell membrane. Functionally, probably part of an ABC transporter complex. Responsible for energy coupling to the transport system. This Methanosarcina mazei (strain ATCC BAA-159 / DSM 3647 / Goe1 / Go1 / JCM 11833 / OCM 88) (Methanosarcina frisia) protein is Putative ABC transporter ATP-binding protein MM_2387.